A 253-amino-acid chain; its full sequence is Salivary gland SP38-40.B protein (253 aa).

A signal peptide spans 1-21 (MRIKFLVVLAVICLLAHYASA). Disordered stretches follow at residues 23–51 (GMGGDKKPKDAPKPKDAPKPKEVKPVKAD), 140–168 (KDEKKEKKVVKVIKPPKEKPPKKPRKECS), and 203–253 (VQGK…DAKK). Basic and acidic residues-rich tracts occupy residues 26–51 (GDKKPKDAPKPKDAPKPKEVKPVKAD) and 154–168 (PPKEKPPKKPRKECS). Tandem repeats lie at residues 29-34 (KPKDAP) and 35-40 (KPKDAP). A 3 X 6 AA approximate tandem repeats of K-P-K-D-A-P region spans residues 29-47 (KPKDAPKPKDAPKPKEVKP). Residues 41–47 (KPKEVKP) form a 1-3; approximate repeat. 2 consecutive repeat copies span residues 153–156 (KPPK) and 158–161 (KPPK). Residues 153–166 (KPPKEKPPKKPRKE) form a 3 X 4 AA approximate tandem repeats of K-P-P-K region. The 2-3; approximate repeat unit spans residues 162–166 (KPRKE). Positions 206–217 (KQKKGAKKAKGG) are enriched in basic residues. Repeat copies occupy residues 222 to 225 (PKPG), 226 to 229 (PKPA), 230 to 233 (PKPG), 234 to 237 (PKPA), 238 to 241 (PKPV), and 242 to 245 (PKPA). Residues 222–249 (PKPGPKPAPKPGPKPAPKPVPKPADKPK) form a 7 X 4 AA approximate tandem repeats of P-K-P-[GAV] region. A compositionally biased stretch (pro residues) spans 225-243 (GPKPAPKPGPKPAPKPVPK). Over residues 244–253 (PADKPKDAKK) the composition is skewed to basic and acidic residues. The stretch at 246–249 (DKPK) is one 3-7; approximate repeat.

In terms of tissue distribution, salivary gland.

Its subcellular location is the secreted. In terms of biological role, used by the larvae to construct a supramolecular structure, the larval tube. The protein is Salivary gland SP38-40.B protein (SP38-40.B) of Chironomus tentans (Midge).